The sequence spans 205 residues: Probable ADP-ribosylation factor At2g15310 (205 aa).

Glycine 2 carries N-myristoyl glycine lipidation. Residues 24-31 (GLDGSGKT), 67-71 (DIGGQ), and 126-129 (NKQD) each bind GTP.

Belongs to the small GTPase superfamily. Arf family.

It localises to the golgi apparatus. GTP-binding protein involved in protein trafficking; may modulate vesicle budding and uncoating within the Golgi apparatus. The polypeptide is Probable ADP-ribosylation factor At2g15310 (Arabidopsis thaliana (Mouse-ear cress)).